The chain runs to 704 residues: DNA ligase (704 aa).

NAD(+)-binding positions include 43-47 (DADYD), 92-93 (SL), and E124. Residue K126 is the N6-AMP-lysine intermediate of the active site. Residues R147, E182, K298, and K322 each coordinate NAD(+). The Zn(2+) site is built by C427, C430, C445, and C451. A BRCT domain is found at 625 to 704 (PVASPVAGKI…DGWLRLIGDA (80 aa)).

This sequence belongs to the NAD-dependent DNA ligase family. LigA subfamily. It depends on Mg(2+) as a cofactor. Mn(2+) serves as cofactor.

The enzyme catalyses NAD(+) + (deoxyribonucleotide)n-3'-hydroxyl + 5'-phospho-(deoxyribonucleotide)m = (deoxyribonucleotide)n+m + AMP + beta-nicotinamide D-nucleotide.. Functionally, DNA ligase that catalyzes the formation of phosphodiester linkages between 5'-phosphoryl and 3'-hydroxyl groups in double-stranded DNA using NAD as a coenzyme and as the energy source for the reaction. It is essential for DNA replication and repair of damaged DNA. In Cereibacter sphaeroides (strain ATCC 17029 / ATH 2.4.9) (Rhodobacter sphaeroides), this protein is DNA ligase.